We begin with the raw amino-acid sequence, 109 residues long: Major allergen I polypeptide chain 2 (109 aa).

Positions 1–17 (MRGALLVLALLVTQALG) are cleaved as a signal peptide. A glycan (N-linked (GlcNAc...) asparagine) is linked at N50.

This sequence belongs to the secretoglobin family. In terms of assembly, heterotetramer composed of two non-covalently linked disulfide-linked heterodimer of chains 1 and 2. In terms of tissue distribution, the long form is preferentially expressed in the salivary gland, while the short form is preferentially expressed in the skin.

The protein localises to the secreted. The polypeptide is Major allergen I polypeptide chain 2 (CH2) (Felis catus (Cat)).